Here is a 501-residue protein sequence, read N- to C-terminus: Lysine--tRNA ligase (501 aa).

Mg(2+)-binding residues include Glu411 and Glu418.

This sequence belongs to the class-II aminoacyl-tRNA synthetase family. As to quaternary structure, homodimer. The cofactor is Mg(2+).

It localises to the cytoplasm. It carries out the reaction tRNA(Lys) + L-lysine + ATP = L-lysyl-tRNA(Lys) + AMP + diphosphate. The sequence is that of Lysine--tRNA ligase from Aliivibrio salmonicida (strain LFI1238) (Vibrio salmonicida (strain LFI1238)).